Consider the following 484-residue polypeptide: MDFLSILPPQRHCTSELCDNDESVQAIISALEYTGLAKILTETFSADEFVEALDARLLYIAHIILSCKETNVPINTDTFLCPLAERIKVDVDDLNAGSLKCMKVLLHHCTNRYFIKIVEKMTRGQSSNLLWFLVRNELVTGSSVVKQCSYKPGLNSVAHGIFRPASRFEVFGKVHEPIVRDVIATFVERRPIPVSETLGLLIDPFSGTFGASIDLCYGIEEHDDGFVTVGERAHVYEIKCMARYIYSAADVEGFLDNPTLKGFASLIKGATFPLIEHRLPGATPSSGAHIVSHDRMFETNRKRKSIYESNDYVRRLLNINRGVKSTVYIFREKPQPDERDKLTLECLAKFTANIFLNARHKYFDQTSMQYFVVTQHYINDHPDPECIEPDTLPRVSVVTALFKTRNIGTHHSLEVNHKTYPNSAIPFALIVTPVAFDAEILSVFLRETFDNYAQQVYNKSKIRLWDPNFLRGFVASHRELEKTP.

It belongs to the herpesviridae alkaline nuclease family. Interacts with major DNA-binding protein; this interaction increases the nuclease processivity of the alkaline exonuclease.

It localises to the host nucleus. The protein resides in the host cytoplasm. Functionally, plays a role in processing non linear or branched viral DNA intermediates in order to promote the production of mature packaged unit-length linear progeny viral DNA molecules. Exhibits endonuclease and exonuclease activities and accepts both double-stranded and single-stranded DNA as substrate. Exonuclease digestion of DNA is in the 5'-&gt; 3' direction and the products are 5'-monophosphate nucleosides. Additionally, forms a recombinase with the major DNA-binding protein, which displays strand exchange activity. The protein is Alkaline nuclease of Elephas maximus (Indian elephant).